The following is a 464-amino-acid chain: Protein FAM90A1 (464 aa).

Disordered regions lie at residues M1–K43, P71–A294, P312–H386, P412–P437, and V445–E464. 2 stretches are compositionally biased toward basic and acidic residues: residues G74–K83 and N97–R114. A compositionally biased stretch (low complexity) spans L180–L197. Polar residues predominate over residues T344 to Q355.

The protein belongs to the FAM90 family.

The polypeptide is Protein FAM90A1 (FAM90A1) (Homo sapiens (Human)).